A 658-amino-acid chain; its full sequence is MSNTVSLQFPDGSVREYDASMTGAALAESISKSLAKKAVAYAVDGTVRDLSDPLGASGKVEIITREDPRALELIRHDTAHVLAEAVQELFPGTQVTIGPVIENGFYYDFARNEPFTLDDLPVIEKKMREIIQRNKPFTKEVWSREKAKQVFSDKGESYKVELVDAIPAGQDLKIYYQGDWFDLCRGPHMASTGQIGNSFKLMKVAGAYWRGDANNPMLTRIYGTAFANDNDLQAYLHMLEEAEKRDHRRLGREMDLFHFQEEGPGVVFWHAKGWKMFQNLVSYMRRRLDSHGYQEVNTPQVLDKSLWETSGHWGWYRDNMFKVTVAGDDTDDDRVFALKPMNCPGHVQIFKHGLKSYRDLPIKLAEFGNVHRYEPSGALHGLMRVRGFTQDDAHIFCTEEQMAAECLQINDHILSVYKDFGFEEITIKLSTRPEKRVGSDELWDRAESVMMTVLEQIRQQSNNIKTGILPGEGAFYGPKFEYTLKDAIGREWQCGTTQVDFNLPERFGAFYIGADSEKKQPVMIHRAICGSMERFLGILIENFAGHMPLWFAPVQVVVATITSDADEYAKEAAAKLKAAGLQVVTDLRNEKINYKVREHSLQKVPVILVCGKREAEEKTVNMRRLGSRDQESMTLDEAIARLCEEATPPDLLRLKNAG.

One can recognise a TGS domain in the interval 1–64 (MSNTVSLQFP…GASGKVEIIT (64 aa)). The catalytic stretch occupies residues 246-548 (DHRRLGREMD…LIENFAGHMP (303 aa)). The Zn(2+) site is built by Cys343, His394, and His525.

The protein belongs to the class-II aminoacyl-tRNA synthetase family. As to quaternary structure, homodimer. It depends on Zn(2+) as a cofactor.

The protein localises to the cytoplasm. It catalyses the reaction tRNA(Thr) + L-threonine + ATP = L-threonyl-tRNA(Thr) + AMP + diphosphate + H(+). Catalyzes the attachment of threonine to tRNA(Thr) in a two-step reaction: L-threonine is first activated by ATP to form Thr-AMP and then transferred to the acceptor end of tRNA(Thr). Also edits incorrectly charged L-seryl-tRNA(Thr). This chain is Threonine--tRNA ligase, found in Brucella melitensis biotype 2 (strain ATCC 23457).